Consider the following 251-residue polypeptide: Octanoyltransferase (251 aa).

The BPL/LPL catalytic domain occupies 49–230 (DEIPDQLLIL…ALDDALAGRL (182 aa)). Substrate is bound by residues 87–94 (RGGRITWH), 160–162 (AIG), and 173–175 (GVA). Cysteine 191 serves as the catalytic Acyl-thioester intermediate.

It belongs to the LipB family.

It is found in the cytoplasm. The catalysed reaction is octanoyl-[ACP] + L-lysyl-[protein] = N(6)-octanoyl-L-lysyl-[protein] + holo-[ACP] + H(+). It participates in protein modification; protein lipoylation via endogenous pathway; protein N(6)-(lipoyl)lysine from octanoyl-[acyl-carrier-protein]: step 1/2. Its function is as follows. Catalyzes the transfer of endogenously produced octanoic acid from octanoyl-acyl-carrier-protein onto the lipoyl domains of lipoate-dependent enzymes. Lipoyl-ACP can also act as a substrate although octanoyl-ACP is likely to be the physiological substrate. This chain is Octanoyltransferase, found in Corynebacterium glutamicum (strain R).